The primary structure comprises 112 residues: UPF0060 membrane protein Mpe_A1656 (112 aa).

4 helical membrane passes run 9 to 29 (GLFF…WLVL), 34 to 54 (SAWL…LLTL), 65 to 85 (AYGG…DGVV), and 91 to 111 (LVGG…PRAA).

Belongs to the UPF0060 family.

The protein resides in the cell inner membrane. The chain is UPF0060 membrane protein Mpe_A1656 from Methylibium petroleiphilum (strain ATCC BAA-1232 / LMG 22953 / PM1).